The following is a 645-amino-acid chain: 1-deoxy-D-xylulose-5-phosphate synthase 1 (645 aa).

The tract at residues 1-20 is disordered; it reads MTDTKTPTLDRVAGPADLRS. Residues H78 and 119 to 121 contribute to the thiamine diphosphate site; that span reads AHS. Mg(2+) is bound at residue D150. Thiamine diphosphate contacts are provided by residues 151-152, N179, Y291, and E373; that span reads GS. Position 179 (N179) interacts with Mg(2+).

The protein belongs to the transketolase family. DXPS subfamily. Homodimer. Requires Mg(2+) as cofactor. The cofactor is thiamine diphosphate.

The enzyme catalyses D-glyceraldehyde 3-phosphate + pyruvate + H(+) = 1-deoxy-D-xylulose 5-phosphate + CO2. Its pathway is metabolic intermediate biosynthesis; 1-deoxy-D-xylulose 5-phosphate biosynthesis; 1-deoxy-D-xylulose 5-phosphate from D-glyceraldehyde 3-phosphate and pyruvate: step 1/1. Its function is as follows. Catalyzes the acyloin condensation reaction between C atoms 2 and 3 of pyruvate and glyceraldehyde 3-phosphate to yield 1-deoxy-D-xylulose-5-phosphate (DXP). This Roseobacter denitrificans (strain ATCC 33942 / OCh 114) (Erythrobacter sp. (strain OCh 114)) protein is 1-deoxy-D-xylulose-5-phosphate synthase 1.